The sequence spans 308 residues: Probable D,D-dipeptide transport ATP-binding protein DdpF (308 aa).

The 236-residue stretch at 8–243 (LRDVHINFPA…PAHPYTRLLL (236 aa)) folds into the ABC transporter domain. 49–56 (GESGCGKS) lines the ATP pocket.

It belongs to the ABC transporter superfamily. The complex is composed of two ATP-binding proteins (DdpD and DdpF), two transmembrane proteins (DdpB and DdpC) and a solute-binding protein (DdpA).

Its subcellular location is the cell inner membrane. In terms of biological role, part of the ABC transporter complex DdpABCDF, which is probably involved in D,D-dipeptide transport. Probably responsible for energy coupling to the transport system. This Escherichia coli (strain K12) protein is Probable D,D-dipeptide transport ATP-binding protein DdpF.